We begin with the raw amino-acid sequence, 70 residues long: Small ribosomal subunit protein bS21A (70 aa).

This sequence belongs to the bacterial ribosomal protein bS21 family.

In Burkholderia orbicola (strain AU 1054), this protein is Small ribosomal subunit protein bS21A.